We begin with the raw amino-acid sequence, 117 residues long: Eukaryotic translation initiation factor 4E-binding protein 1 (117 aa).

Polar residues-rich tracts occupy residues 1–12 (MSAGSSCSQTPS) and 33–47 (YSTT…TTPG). The disordered stretch occupies residues 1-47 (MSAGSSCSQTPSRAIPTRRVALGDGVQLPPGDYSTTPGGTLFSTTPG). Serine 2 is subject to N-acetylserine. Threonine 36 and threonine 40 each carry phosphothreonine. The residue at position 43 (serine 43) is a Phosphoserine. Phosphothreonine occurs at positions 45 and 49. Tyrosine 53 bears the Phosphotyrosine mark. The YXXXXLphi motif motif lies at 53 to 59 (YDRKFLM). Lysine 56 is covalently cross-linked (Glycyl lysine isopeptide (Lys-Gly) (interchain with G-Cter in ubiquitin)). Residue serine 64 is modified to Phosphoserine. The disordered stretch occupies residues 64 to 117 (SPVAKTPPKDLPAIPGVTSPTSDEPPMQASQSQLPSSPEDKRAGGEESQFEMDI). Residue threonine 69 is modified to Phosphothreonine. Residues 81-99 (TSPTSDEPPMQASQSQLPS) show a composition bias toward polar residues. 5 positions are modified to phosphoserine: serine 82, serine 95, serine 99, serine 100, and serine 111. A TOS motif motif is present at residues 113-117 (FEMDI).

It belongs to the eIF4E-binding protein family. Hypophosphorylated EIF4EBP1 competes with EIF4G1/EIF4G3 to interact with EIF4E; insulin stimulated MAP-kinase (MAPK1 and MAPK3) or mTORC1 phosphorylation of EIF4EBP1 causes dissociation of the complex allowing EIF4G1/EIF4G3 to bind and consequent initiation of translation. Interacts (via TOS motif) with RPTOR; promoting phosphorylation by mTORC1. In terms of processing, phosphorylated on serine and threonine residues in response to insulin, EGF and PDGF. Phosphorylation at Thr-36, Thr-45, Ser-64 and Thr-69, corresponding to the hyperphosphorylated form, is regulated by mTORC1 and abolishes binding to EIF4E. Ubiquitinated: when eIF4E levels are low, hypophosphorylated form is ubiquitinated by the BCR(KLHL25) complex, leading to its degradation and serving as a homeostatic mechanism to maintain translation and prevent eIF4E inhibition when eIF4E levels are low. Not ubiquitinated when hyperphosphorylated (at Thr-36, Thr-45, Ser-64 and Thr-69) or associated with eIF4E. As to expression, highest expression in fat cells.

The protein resides in the cytoplasm. Its subcellular location is the nucleus. Repressor of translation initiation that regulates EIF4E activity by preventing its assembly into the eIF4F complex: hypophosphorylated form competes with EIF4G1/EIF4G3 and strongly binds to EIF4E, leading to repress translation. In contrast, hyperphosphorylated form dissociates from EIF4E, allowing interaction between EIF4G1/EIF4G3 and EIF4E, leading to initiation of translation. Mediates the regulation of protein translation by hormones, growth factors and other stimuli that signal through the MAP kinase and mTORC1 pathways. The sequence is that of Eukaryotic translation initiation factor 4E-binding protein 1 (Eif4ebp1) from Mus musculus (Mouse).